The primary structure comprises 448 residues: Solute carrier family 52, riboflavin transporter, member 3-A (448 aa).

3 helical membrane-spanning segments follow: residues 11 to 31, 40 to 60, and 73 to 93; these read AFGLGSWVSINGLWVELPLIV, LPSYLTVIIQFANLGPLLVTL, and LAIYAVLSIGVVACILLAVFW. N-linked (GlcNAc...) asparagine glycosylation is present at Asn94. A run of 2 helical transmembrane segments spans residues 107 to 127 and 138 to 158; these read AFFILTFFLALVDCTSSVTFL and ITTYFIGEGLSGLVPGLVALA. 4 N-linked (GlcNAc...) asparagine glycosylation sites follow: Asn168, Asn171, Asn175, and Asn194. The next 6 membrane-spanning stretches (helical) occupy residues 198–218, 280–300, 315–335, 339–359, 376–396, and 407–427; these read EIFFSFLAVMTTISLGAFLIL, AFIYVMVLWVNSATNGLLPSV, LSAALSAVANPVACIIAMFFP, LVFLGILCLLGSTFGGYNMAM, AIIVLSWVFFTGLLSYVKVMV, and ALVWCGAAVQTGSLLGSIIMF.

It belongs to the riboflavin transporter family.

The protein resides in the cell membrane. It carries out the reaction riboflavin(in) = riboflavin(out). Functionally, plasma membrane transporter mediating the uptake by cells of the water soluble vitamin B2/riboflavin that plays a key role in biochemical oxidation-reduction reactions of the carbohydrate, lipid, and amino acid metabolism. The protein is Solute carrier family 52, riboflavin transporter, member 3-A (slc52a3a) of Danio rerio (Zebrafish).